The sequence spans 332 residues: L-lactate dehydrogenase A chain (332 aa).

Lys5 carries the post-translational modification N6-acetyllysine; alternate. An N6-succinyllysine; alternate modification is found at Lys5. N6-acetyllysine is present on Lys14. Thr18 carries the post-translational modification Phosphothreonine. 29–57 is a binding site for NAD(+); that stretch reads GAVGMACAISILMKDLADELALVDVIEDK. Position 57 is an N6-acetyllysine; alternate (Lys57). A Glycyl lysine isopeptide (Lys-Gly) (interchain with G-Cter in SUMO2); alternate cross-link involves residue Lys57. Lys81 is modified (N6-acetyllysine). Arg99 is an NAD(+) binding site. Arg106 lines the substrate pocket. Lys118 is subject to N6-acetyllysine; alternate. Lys118 carries the N6-succinyllysine; alternate modification. Lys126 carries the post-translational modification N6-acetyllysine. Residue Asn138 coordinates NAD(+). Substrate contacts are provided by Asn138 and Arg169. His193 serves as the catalytic Proton acceptor. Residue Lys232 is modified to N6-acetyllysine. A Phosphotyrosine modification is found at Tyr239. Lys243 is modified (N6-acetyllysine). Residue Thr248 participates in substrate binding. Phosphothreonine occurs at positions 309 and 322.

It belongs to the LDH/MDH superfamily. LDH family. In terms of assembly, homotetramer. Interacts with PTEN upstream reading frame protein MP31. In terms of processing, ISGylated.

It is found in the cytoplasm. It catalyses the reaction (S)-lactate + NAD(+) = pyruvate + NADH + H(+). The protein operates within fermentation; pyruvate fermentation to lactate; (S)-lactate from pyruvate: step 1/1. In terms of biological role, interconverts simultaneously and stereospecifically pyruvate and lactate with concomitant interconversion of NADH and NAD(+). This is L-lactate dehydrogenase A chain (LDHA) from Monodelphis domestica (Gray short-tailed opossum).